A 230-amino-acid polypeptide reads, in one-letter code: NAD(P)H-quinone oxidoreductase subunit K, chloroplastic (230 aa).

Residues Cys43, Cys44, Cys108, and Cys139 each coordinate [4Fe-4S] cluster.

It belongs to the complex I 20 kDa subunit family. NDH is composed of at least 16 different subunits, 5 of which are encoded in the nucleus. Requires [4Fe-4S] cluster as cofactor.

It is found in the plastid. Its subcellular location is the chloroplast thylakoid membrane. The enzyme catalyses a plastoquinone + NADH + (n+1) H(+)(in) = a plastoquinol + NAD(+) + n H(+)(out). It catalyses the reaction a plastoquinone + NADPH + (n+1) H(+)(in) = a plastoquinol + NADP(+) + n H(+)(out). Functionally, NDH shuttles electrons from NAD(P)H:plastoquinone, via FMN and iron-sulfur (Fe-S) centers, to quinones in the photosynthetic chain and possibly in a chloroplast respiratory chain. The immediate electron acceptor for the enzyme in this species is believed to be plastoquinone. Couples the redox reaction to proton translocation, and thus conserves the redox energy in a proton gradient. The protein is NAD(P)H-quinone oxidoreductase subunit K, chloroplastic of Lotus japonicus (Lotus corniculatus var. japonicus).